Here is a 477-residue protein sequence, read N- to C-terminus: Glycogen synthase (477 aa).

Position 15 (Lys-15) interacts with ADP-alpha-D-glucose.

It belongs to the glycosyltransferase 1 family. Bacterial/plant glycogen synthase subfamily.

It carries out the reaction [(1-&gt;4)-alpha-D-glucosyl](n) + ADP-alpha-D-glucose = [(1-&gt;4)-alpha-D-glucosyl](n+1) + ADP + H(+). It functions in the pathway glycan biosynthesis; glycogen biosynthesis. Its function is as follows. Synthesizes alpha-1,4-glucan chains using ADP-glucose. In Shigella flexneri, this protein is Glycogen synthase.